Reading from the N-terminus, the 294-residue chain is Probable enoyl-CoA hydratase 2 (294 aa).

(3R)-3-hydroxydecanoyl-CoA contacts are provided by residues His-84 to Gly-85, Lys-113, Asp-190 to His-195, Gly-213, and Phe-243. Residues Asp-165–Ser-269 form the MaoC-like domain. The Microbody targeting signal motif lies at Gly-292 to Leu-294.

It belongs to the short-chain dehydrogenases/reductases (SDR) family.

It is found in the peroxisome. The catalysed reaction is a (3R)-3-hydroxyacyl-CoA = a (2E)-enoyl-CoA + H2O. The sequence is that of Probable enoyl-CoA hydratase 2 (mfeB) from Dictyostelium discoideum (Social amoeba).